A 455-amino-acid chain; its full sequence is MSNRFAVILAAGQGTRMKSKLYKVLHSVCGKPMVQHVVDQVSALGFDEIVTIIGHGADAVKSQLGERVSYALQEEQLGTGHAVLQAESALGGRRGVTIVLCGDTPLLTAETIDHVMSYHEEEQAKATVLTAELADPTGYGRIVRNDKGLVERIVEHKDATSEEKQITEVNTGTYCFDNEALFQALKEVGNNNAQGEYYLPDVIQILQTKGEKVAAYKTAHVEETLGVNDRVALAQAEQVMKRRINEAWMRKGVTFIDPEQTYVSPDATIGQDTVIYPGTMVLGQTTIGEGCVLGPHTELKDSKIGNKTAVKQSVVHNSEVGERVSIGPFSHIRPASMIHDDVRIGNFVEVKKSTIGKESKASHLSYIGDAEVGERVNFSCGSITVNYDGKNKFLTKIEDDAFIGCNSNLIAPVTIGKGALIAAGSTITEDVPSDALSIARARQTNKEHYVTKKNN.

Residues 1 to 230 (MSNRFAVILA…VEETLGVNDR (230 aa)) form a pyrophosphorylase region. Residues 9-12 (LAAG), Lys-23, Gln-73, and 78-79 (GT) each bind UDP-N-acetyl-alpha-D-glucosamine. Asp-103 lines the Mg(2+) pocket. UDP-N-acetyl-alpha-D-glucosamine is bound by residues Gly-140, Glu-155, Asn-170, and Asn-228. Residue Asn-228 coordinates Mg(2+). The tract at residues 231 to 251 (VALAQAEQVMKRRINEAWMRK) is linker. Residues 252–455 (GVTFIDPEQT…KEHYVTKKNN (204 aa)) form an N-acetyltransferase region. UDP-N-acetyl-alpha-D-glucosamine is bound by residues Arg-333 and Lys-351. Residue His-363 is the Proton acceptor of the active site. The UDP-N-acetyl-alpha-D-glucosamine site is built by Tyr-366 and Asn-377. Acetyl-CoA contacts are provided by residues 386–387 (NY), Ala-423, and Arg-440.

In the N-terminal section; belongs to the N-acetylglucosamine-1-phosphate uridyltransferase family. This sequence in the C-terminal section; belongs to the transferase hexapeptide repeat family. As to quaternary structure, homotrimer. Mg(2+) is required as a cofactor.

It localises to the cytoplasm. It catalyses the reaction alpha-D-glucosamine 1-phosphate + acetyl-CoA = N-acetyl-alpha-D-glucosamine 1-phosphate + CoA + H(+). It carries out the reaction N-acetyl-alpha-D-glucosamine 1-phosphate + UTP + H(+) = UDP-N-acetyl-alpha-D-glucosamine + diphosphate. The protein operates within nucleotide-sugar biosynthesis; UDP-N-acetyl-alpha-D-glucosamine biosynthesis; N-acetyl-alpha-D-glucosamine 1-phosphate from alpha-D-glucosamine 6-phosphate (route II): step 2/2. It functions in the pathway nucleotide-sugar biosynthesis; UDP-N-acetyl-alpha-D-glucosamine biosynthesis; UDP-N-acetyl-alpha-D-glucosamine from N-acetyl-alpha-D-glucosamine 1-phosphate: step 1/1. Its pathway is bacterial outer membrane biogenesis; LPS lipid A biosynthesis. Functionally, catalyzes the last two sequential reactions in the de novo biosynthetic pathway for UDP-N-acetylglucosamine (UDP-GlcNAc). The C-terminal domain catalyzes the transfer of acetyl group from acetyl coenzyme A to glucosamine-1-phosphate (GlcN-1-P) to produce N-acetylglucosamine-1-phosphate (GlcNAc-1-P), which is converted into UDP-GlcNAc by the transfer of uridine 5-monophosphate (from uridine 5-triphosphate), a reaction catalyzed by the N-terminal domain. This is Bifunctional protein GlmU from Halalkalibacterium halodurans (strain ATCC BAA-125 / DSM 18197 / FERM 7344 / JCM 9153 / C-125) (Bacillus halodurans).